A 340-amino-acid polypeptide reads, in one-letter code: DNA-directed RNA polymerase subunit alpha (340 aa).

The alpha N-terminal domain (alpha-NTD) stretch occupies residues 1-235; that stretch reads MYRNWTELIK…DQLNPFINFD (235 aa). The tract at residues 251-340 is alpha C-terminal domain (alpha-CTD); the sequence is WNPNLFRKVD…LSKQFEEENF (90 aa).

It belongs to the RNA polymerase alpha chain family. Homodimer. The RNAP catalytic core consists of 2 alpha, 1 beta, 1 beta' and 1 omega subunit. When a sigma factor is associated with the core the holoenzyme is formed, which can initiate transcription.

It catalyses the reaction RNA(n) + a ribonucleoside 5'-triphosphate = RNA(n+1) + diphosphate. DNA-dependent RNA polymerase catalyzes the transcription of DNA into RNA using the four ribonucleoside triphosphates as substrates. This is DNA-directed RNA polymerase subunit alpha from Magnetococcus marinus (strain ATCC BAA-1437 / JCM 17883 / MC-1).